We begin with the raw amino-acid sequence, 310 residues long: Aspartate carbamoyltransferase catalytic subunit (310 aa).

The carbamoyl phosphate site is built by R59 and T60. K87 lines the L-aspartate pocket. Carbamoyl phosphate-binding residues include R109, H139, and Q142. L-aspartate contacts are provided by R172 and R224. Residues A265 and P266 each contribute to the carbamoyl phosphate site.

Belongs to the aspartate/ornithine carbamoyltransferase superfamily. ATCase family. In terms of assembly, heterododecamer (2C3:3R2) of six catalytic PyrB chains organized as two trimers (C3), and six regulatory PyrI chains organized as three dimers (R2).

The enzyme catalyses carbamoyl phosphate + L-aspartate = N-carbamoyl-L-aspartate + phosphate + H(+). It functions in the pathway pyrimidine metabolism; UMP biosynthesis via de novo pathway; (S)-dihydroorotate from bicarbonate: step 2/3. In terms of biological role, catalyzes the condensation of carbamoyl phosphate and aspartate to form carbamoyl aspartate and inorganic phosphate, the committed step in the de novo pyrimidine nucleotide biosynthesis pathway. This is Aspartate carbamoyltransferase catalytic subunit from Lactococcus lactis subsp. cremoris (strain MG1363).